A 195-amino-acid polypeptide reads, in one-letter code: Protein GrpE (195 aa).

This sequence belongs to the GrpE family. As to quaternary structure, homodimer.

Its subcellular location is the cytoplasm. Its function is as follows. Participates actively in the response to hyperosmotic and heat shock by preventing the aggregation of stress-denatured proteins, in association with DnaK and GrpE. It is the nucleotide exchange factor for DnaK and may function as a thermosensor. Unfolded proteins bind initially to DnaJ; upon interaction with the DnaJ-bound protein, DnaK hydrolyzes its bound ATP, resulting in the formation of a stable complex. GrpE releases ADP from DnaK; ATP binding to DnaK triggers the release of the substrate protein, thus completing the reaction cycle. Several rounds of ATP-dependent interactions between DnaJ, DnaK and GrpE are required for fully efficient folding. In Blochmanniella pennsylvanica (strain BPEN), this protein is Protein GrpE.